The following is a 121-amino-acid chain: Spermidine export protein MdtJ (121 aa).

Residue methionine 1 is a topological domain, cytoplasmic. The chain crosses the membrane as a helical span at residues 2–22 (YIYWILLGLAVATEITGTLSM). At 23 to 31 (KWASVSEGN) the chain is on the periplasmic side. The chain crosses the membrane as a helical span at residues 32–52 (GGFILMLVMISLSYIFLSFAV). At 53 to 54 (KK) the chain is on the cytoplasmic side. The helical transmembrane segment at 55–75 (IALGVAYALWEGIGILFITLF) threads the bilayer. The Periplasmic segment spans residues 76-81 (SVLLFD). Residues 82–102 (ESLSLMKIAGLTTLVAGIVLI) traverse the membrane as a helical segment. Residues 103 to 121 (KSGTRKARKPELEVNHGAV) are Cytoplasmic-facing.

Belongs to the drug/metabolite transporter (DMT) superfamily. Small multidrug resistance (SMR) (TC 2.A.7.1) family. MdtJ subfamily. Forms a complex with MdtI.

The protein localises to the cell inner membrane. In terms of biological role, catalyzes the excretion of spermidine. This chain is Spermidine export protein MdtJ (mdtJ), found in Escherichia coli O6:H1 (strain CFT073 / ATCC 700928 / UPEC).